Here is a 290-residue protein sequence, read N- to C-terminus: L-proline cis-3-hydroxylase 1 (290 aa).

Positions 107, 109, and 158 each coordinate Fe cation. Arg-168 lines the 2-oxoglutarate pocket.

It belongs to the L-proline cis-4-/cis-3-hydroxylase family. As to quaternary structure, homodimer. Fe(2+) serves as cofactor.

The enzyme catalyses L-proline + 2-oxoglutarate + O2 = cis-3-hydroxy-L-proline + succinate + CO2. Its activity is regulated as follows. Inhibited by metal ions such as Co(2+), Zn(2+), Ni(2+) or Cu(2+). Is also inhibited by EDTA in vitro. Unlike the procollagen-proline cis-3- and trans-4-hydroxylases from mammals, does not necessarily require L-ascorbate for activity although it does increase the activity of the enzyme. Its function is as follows. Dioxygenase that catalyzes the 2-oxoglutarate-dependent selective hydroxylation of free L-proline to cis-3-hydroxy-L-proline (cis-3-Hyp). D-proline, trans-4-hydroxy-L-proline, cis-4-hydroxy-L-proline, cis-4-hydroxy-D-proline, and 3,4-dehydro-DL-proline are not substrates. This is L-proline cis-3-hydroxylase 1 from Streptomyces sp.